The sequence spans 140 residues: 3-hydroxyacyl-[acyl-carrier-protein] dehydratase FabZ (140 aa).

H48 is an active-site residue.

Belongs to the thioester dehydratase family. FabZ subfamily.

The protein resides in the cytoplasm. It catalyses the reaction a (3R)-hydroxyacyl-[ACP] = a (2E)-enoyl-[ACP] + H2O. Functionally, involved in unsaturated fatty acids biosynthesis. Catalyzes the dehydration of short chain beta-hydroxyacyl-ACPs and long chain saturated and unsaturated beta-hydroxyacyl-ACPs. The protein is 3-hydroxyacyl-[acyl-carrier-protein] dehydratase FabZ of Caldicellulosiruptor bescii (strain ATCC BAA-1888 / DSM 6725 / KCTC 15123 / Z-1320) (Anaerocellum thermophilum).